A 35-amino-acid chain; its full sequence is uncharacterized protein (35 aa).

Residues 1–18 (MRSLVFVQLSLLSWEIFC) form the signal peptide.

This is an uncharacterized protein from Saccharomyces cerevisiae (strain ATCC 204508 / S288c) (Baker's yeast).